Reading from the N-terminus, the 455-residue chain is Exodeoxyribonuclease 7 large subunit (455 aa).

Belongs to the XseA family. In terms of assembly, heterooligomer composed of large and small subunits.

The protein resides in the cytoplasm. It carries out the reaction Exonucleolytic cleavage in either 5'- to 3'- or 3'- to 5'-direction to yield nucleoside 5'-phosphates.. Functionally, bidirectionally degrades single-stranded DNA into large acid-insoluble oligonucleotides, which are then degraded further into small acid-soluble oligonucleotides. This chain is Exodeoxyribonuclease 7 large subunit, found in Koribacter versatilis (strain Ellin345).